Consider the following 84-residue polypeptide: MPKKAASPETKAASFETSLSELEQIVTRLESGELPLEEALNEFERGVQLARIGQQTLLQAEQRVQVLLSDDVDAPLTPFTPDTE.

The protein belongs to the XseB family. Heterooligomer composed of large and small subunits.

Its subcellular location is the cytoplasm. It carries out the reaction Exonucleolytic cleavage in either 5'- to 3'- or 3'- to 5'-direction to yield nucleoside 5'-phosphates.. Functionally, bidirectionally degrades single-stranded DNA into large acid-insoluble oligonucleotides, which are then degraded further into small acid-soluble oligonucleotides. The protein is Exodeoxyribonuclease 7 small subunit of Yersinia enterocolitica serotype O:8 / biotype 1B (strain NCTC 13174 / 8081).